The sequence spans 398 residues: Aspartate aminotransferase (398 aa).

Residues G36, W132, and N185 each coordinate L-aspartate. Position 248 is an N6-(pyridoxal phosphate)lysine (K248). R376 serves as a coordination point for L-aspartate.

The protein belongs to the class-I pyridoxal-phosphate-dependent aminotransferase family. As to quaternary structure, homodimer. Pyridoxal 5'-phosphate is required as a cofactor.

The protein localises to the cytoplasm. It catalyses the reaction L-aspartate + 2-oxoglutarate = oxaloacetate + L-glutamate. The polypeptide is Aspartate aminotransferase (aspC) (Pseudomonas aeruginosa (strain ATCC 15692 / DSM 22644 / CIP 104116 / JCM 14847 / LMG 12228 / 1C / PRS 101 / PAO1)).